The primary structure comprises 145 residues: D-aminoacyl-tRNA deacylase (145 aa).

The short motif at 137-138 (GP) is the Gly-cisPro motif, important for rejection of L-amino acids element.

This sequence belongs to the DTD family. In terms of assembly, homodimer.

Its subcellular location is the cytoplasm. The catalysed reaction is glycyl-tRNA(Ala) + H2O = tRNA(Ala) + glycine + H(+). It carries out the reaction a D-aminoacyl-tRNA + H2O = a tRNA + a D-alpha-amino acid + H(+). Its function is as follows. An aminoacyl-tRNA editing enzyme that deacylates mischarged D-aminoacyl-tRNAs. Also deacylates mischarged glycyl-tRNA(Ala), protecting cells against glycine mischarging by AlaRS. Acts via tRNA-based rather than protein-based catalysis; rejects L-amino acids rather than detecting D-amino acids in the active site. By recycling D-aminoacyl-tRNA to D-amino acids and free tRNA molecules, this enzyme counteracts the toxicity associated with the formation of D-aminoacyl-tRNA entities in vivo and helps enforce protein L-homochirality. The chain is D-aminoacyl-tRNA deacylase from Pseudomonas putida (strain ATCC 47054 / DSM 6125 / CFBP 8728 / NCIMB 11950 / KT2440).